The sequence spans 138 residues: Gas vesicle protein A (138 aa).

Residues 74 to 138 form a disordered region; that stretch reads EAGPRKDPGL…STSRKKEEQE (65 aa). Residues 116-129 are compositionally biased toward low complexity; the sequence is GSSSGSSSGSSSRS.

Belongs to the gas vesicle GvpA family. In terms of assembly, the gas vesicle shell is 2 nm thick and consists of a single layer of this protein. It forms helical ribs nearly perpendicular to the long axis of the vesicle.

It localises to the gas vesicle shell. In terms of biological role, gas vesicles are hollow, gas filled proteinaceous nanostructures found in some microorganisms. During planktonic growth they allow positioning of the organism at a favorable depth for light or nutrient acquisition. GvpA forms the protein shell. It is not clear what function gas vesicles perform in soil bacteria. The chain is Gas vesicle protein A from Streptomyces sp. (strain CB03234).